Reading from the N-terminus, the 438-residue chain is Protein maelstrom 2 (438 aa).

The HMG box DNA-binding region spans 2-69 (APKKRNGFMT…LERTAKKERL (68 aa)). A disordered region spans residues 374–438 (KEMGSRDLSP…NMGAGKKIAR (65 aa)). Residues 381–391 (LSPSSSHQSVS) are compositionally biased toward polar residues.

Belongs to the maelstrom family.

Its subcellular location is the cytoplasm. It localises to the nucleus. Its function is as follows. Involved both in the piRNA and miRNA metabolic processes. As a component of the meiotic nuage, plays a central role during oogenesis by repressing transposable elements and preventing their mobilization, which is essential for the germline integrity. Repression of transposable elements is mediated via the piRNA metabolic process, which mediates the repression of transposable elements during meiosis by forming complexes composed of piRNAs and Piwi proteins and governs the repression of transposons. As a nuclear component, it is required for proper differentiation in the germline stem cell (GSC) lineage by repressing microRNA-7 (miR-7), thereby acting as an indirect regulator of bag-of-marbles (Bam). Acts by binding to the promoter of miR-7 gene and repressing its expression; miR-7 repression alleviates the Bam repression by miR-7, thereby allowing differentiation in the germline stem cell (GSC) lineage. This chain is Protein maelstrom 2 (mael2), found in Drosophila persimilis (Fruit fly).